A 782-amino-acid polypeptide reads, in one-letter code: E3 ubiquitin-protein ligase SopA (782 aa).

Residue C753 is the Glycyl thioester intermediate of the active site.

The protein belongs to the SopA E3 ligase family. In terms of processing, ubiquitinated in the presence of host E1 ubiquitin-activating enzyme, E2 ubiquitin-conjugating enzyme and ubiquitin.

Its subcellular location is the secreted. It localises to the host cell. It catalyses the reaction S-ubiquitinyl-[E2 ubiquitin-conjugating enzyme]-L-cysteine + [acceptor protein]-L-lysine = [E2 ubiquitin-conjugating enzyme]-L-cysteine + N(6)-ubiquitinyl-[acceptor protein]-L-lysine.. Functionally, effector proteins function to alter host cell physiology and promote bacterial survival in host tissues. This protein is an E3 ubiquitin ligase that interferes with host's ubiquitination pathway. The protein is E3 ubiquitin-protein ligase SopA (sopA) of Salmonella choleraesuis (strain SC-B67).